Consider the following 338-residue polypeptide: Erlin-2 (338 aa).

Over 1 to 3 (MAQ) the chain is Cytoplasmic. Residues 4 to 24 (LGAVVAVAASFFCASLFSAVH) traverse the membrane as a helical segment. Residues 25–338 (KIEEGHIGVY…DEPMEADSEN (314 aa)) are Lumenal-facing. A glycan (N-linked (GlcNAc...) asparagine) is linked at Asn-106. Positions 177–309 (EAIRRNYELM…DIPNMFMDSA (133 aa)) are interaction with ERLIN1. Lys-267 is modified (N6-acetyllysine).

The protein belongs to the band 7/mec-2 family. As to quaternary structure, forms a heteromeric complex with ERLIN1. In complex with ERLIN1, interacts with RNF170. Interacts with activated ITPR1, independently of the degree of ITPR1 polyubiquitination. Interacts with SCAP, INSIG1, SREBF1 and SREBF2 under cholesterol sufficiency conditions; indicative for an association with the SCAP-SREBP-INSIG complex. Probably part of an AMFR/gp78 and INSIG1-containing ubiquitin ligase complex involved in ERAD of HMGCR. Interacts with TMUB1; TMUB1 bridges the association with AMFR. Interacts with SYVN1 and RNF139. Interacts with TMEM259. Interacts with TMEM41B. Deubiquitinated by USP25; leading to stabilization.

The protein resides in the endoplasmic reticulum membrane. In terms of biological role, component of the ERLIN1/ERLIN2 complex which mediates the endoplasmic reticulum-associated degradation (ERAD) of inositol 1,4,5-trisphosphate receptors (IP3Rs) such as ITPR1. Promotes sterol-accelerated ERAD of HMGCR probably implicating an AMFR/gp78-containing ubiquitin ligase complex. Involved in regulation of cellular cholesterol homeostasis by regulation the SREBP signaling pathway. May promote ER retention of the SCAP-SREBF complex. The protein is Erlin-2 (ERLIN2) of Bos taurus (Bovine).